A 335-amino-acid chain; its full sequence is 4-hydroxy-3-methylbut-2-enyl diphosphate reductase (335 aa).

Cys14 is a [4Fe-4S] cluster binding site. 2 residues coordinate (2E)-4-hydroxy-3-methylbut-2-enyl diphosphate: His43 and His81. The dimethylallyl diphosphate site is built by His43 and His81. The isopentenyl diphosphate site is built by His43 and His81. Cys103 contacts [4Fe-4S] cluster. His132 provides a ligand contact to (2E)-4-hydroxy-3-methylbut-2-enyl diphosphate. Residue His132 participates in dimethylallyl diphosphate binding. His132 contacts isopentenyl diphosphate. Catalysis depends on Glu134, which acts as the Proton donor. Thr179 serves as a coordination point for (2E)-4-hydroxy-3-methylbut-2-enyl diphosphate. A [4Fe-4S] cluster-binding site is contributed by Cys209. (2E)-4-hydroxy-3-methylbut-2-enyl diphosphate contacts are provided by Ser237, Ser238, Asn239, and Ser285. Residues Ser237, Ser238, Asn239, and Ser285 each coordinate dimethylallyl diphosphate. Ser237, Ser238, Asn239, and Ser285 together coordinate isopentenyl diphosphate.

This sequence belongs to the IspH family. It depends on [4Fe-4S] cluster as a cofactor.

The enzyme catalyses isopentenyl diphosphate + 2 oxidized [2Fe-2S]-[ferredoxin] + H2O = (2E)-4-hydroxy-3-methylbut-2-enyl diphosphate + 2 reduced [2Fe-2S]-[ferredoxin] + 2 H(+). It carries out the reaction dimethylallyl diphosphate + 2 oxidized [2Fe-2S]-[ferredoxin] + H2O = (2E)-4-hydroxy-3-methylbut-2-enyl diphosphate + 2 reduced [2Fe-2S]-[ferredoxin] + 2 H(+). Its pathway is isoprenoid biosynthesis; dimethylallyl diphosphate biosynthesis; dimethylallyl diphosphate from (2E)-4-hydroxy-3-methylbutenyl diphosphate: step 1/1. It functions in the pathway isoprenoid biosynthesis; isopentenyl diphosphate biosynthesis via DXP pathway; isopentenyl diphosphate from 1-deoxy-D-xylulose 5-phosphate: step 6/6. In terms of biological role, catalyzes the conversion of 1-hydroxy-2-methyl-2-(E)-butenyl 4-diphosphate (HMBPP) into a mixture of isopentenyl diphosphate (IPP) and dimethylallyl diphosphate (DMAPP). Acts in the terminal step of the DOXP/MEP pathway for isoprenoid precursor biosynthesis. The polypeptide is 4-hydroxy-3-methylbut-2-enyl diphosphate reductase (Deinococcus radiodurans (strain ATCC 13939 / DSM 20539 / JCM 16871 / CCUG 27074 / LMG 4051 / NBRC 15346 / NCIMB 9279 / VKM B-1422 / R1)).